The chain runs to 320 residues: Heterogeneous nuclear ribonucleoprotein A1 (320 aa).

Methionine 1 carries the post-translational modification N-acetylmethionine. Serine 2 carries the N-acetylserine; in Heterogeneous nuclear ribonucleoprotein A1, N-terminally processed modification. A Phosphoserine modification is found at serine 2. Residue lysine 3 is modified to N6-acetyllysine; alternate. Lysine 3 participates in a covalent cross-link: Glycyl lysine isopeptide (Lys-Gly) (interchain with G-Cter in SUMO2); alternate. 2 positions are modified to phosphoserine: serine 4 and serine 6. Residues 4–94 (SESPKEPEQL…EPKRAVSRED (91 aa)) form a globular A domain region. Lysine 8 participates in a covalent cross-link: Glycyl lysine isopeptide (Lys-Gly) (interchain with G-Cter in SUMO2). RRM domains follow at residues 14–97 (RKLF…DSQR) and 105–184 (KKIF…LCKQ). Serine 22 bears the Phosphoserine mark. Residue lysine 78 forms a Glycyl lysine isopeptide (Lys-Gly) (interchain with G-Cter in SUMO2) linkage. Positions 95–185 (SQRPGAHLTV…EVRKALCKQE (91 aa)) are globular B domain. A Glycyl lysine isopeptide (Lys-Gly) (interchain with G-Cter in SUMO) cross-link involves residue lysine 113. Residues lysine 179 and lysine 183 each participate in a glycyl lysine isopeptide (Lys-Gly) (interchain with G-Cter in SUMO2) cross-link. Positions 188-216 (SASSSQRGRSGSGNFGGGRGGGFGGNDNF) are disordered. The residue at position 192 (serine 192) is a Phosphoserine; by MKNK2. Arginine 194 carries the asymmetric dimethylarginine; alternate modification. Residue arginine 194 is modified to Dimethylated arginine; alternate. Position 194 is an omega-N-methylarginine; alternate (arginine 194). The segment covering 197 to 216 (SGSGNFGGGRGGGFGGNDNF) has biased composition (gly residues). Serine 199 is modified (phosphoserine). Residues arginine 206, arginine 218, arginine 225, and arginine 232 each carry the asymmetric dimethylarginine; alternate modification. Arginine 206 bears the Dimethylated arginine; alternate mark. Arginine 206, arginine 218, arginine 225, and arginine 232 each carry omega-N-methylarginine; alternate. An RNA-binding RGG-box region spans residues 218–240 (RGGNFSGRGGFGGSRGGGGYGGS). Dimethylated arginine; alternate is present on arginine 225. Positions 268–305 (NQSSNFGPMKGGNFGGRSSGPYGGGGQYFAKPRNQGGY) are nuclear targeting sequence. Residues 271-320 (SNFGPMKGGNFGGRSSGPYGGGGQYFAKPRNQGGYGGSSSSSSYGSGRRF) form a disordered region. Gly residues predominate over residues 276-294 (MKGGNFGGRSSGPYGGGGQ). Arginine 284 carries the post-translational modification Omega-N-methylarginine. Serine 285 carries the post-translational modification Phosphoserine. Lysine 298 carries the N6-acetyllysine; alternate modification. Lysine 298 participates in a covalent cross-link: Glycyl lysine isopeptide (Lys-Gly) (interchain with G-Cter in SUMO2); alternate. Residue arginine 300 is modified to Omega-N-methylarginine. A compositionally biased stretch (low complexity) spans 308–320 (SSSSSSYGSGRRF). Residue serine 309 is modified to Phosphoserine. Serine 310, serine 311, and serine 312 each carry phosphoserine; by MKNK2. Serine 313 and serine 316 each carry phosphoserine. Arginine 318 is subject to Omega-N-methylarginine.

As to quaternary structure, identified in the spliceosome C complex. Identified in a IGF2BP1-dependent mRNP granule complex containing untranslated mRNAs. Interacts with SEPT6. Interacts with C9orf72. Interacts with KHDRBS1. Interacts with UBQLN2. Interacts with PPIA/CYPA. Sumoylated.

The protein localises to the nucleus. The protein resides in the cytoplasm. Functionally, involved in the packaging of pre-mRNA into hnRNP particles, transport of poly(A) mRNA from the nucleus to the cytoplasm and modulation of splice site selection. Plays a role in the splicing of pyruvate kinase PKM by binding repressively to sequences flanking PKM exon 9, inhibiting exon 9 inclusion and resulting in exon 10 inclusion and production of the PKM M2 isoform. Binds to the IRES and thereby inhibits the translation of the apoptosis protease activating factor APAF1. May bind to specific miRNA hairpins. The protein is Heterogeneous nuclear ribonucleoprotein A1 (Hnrnpa1) of Rattus norvegicus (Rat).